We begin with the raw amino-acid sequence, 354 residues long: MKIAILLSGGVDSSVALYTMIQKGYKNIKCYYLKIWLEDELSYIGECPWKEDITYVDSVCKKFNVPYEIINLQEEYYNRVVTYAIEELKMGNTPSPDIFCNQRIKFGAFFEKINEKYDLIVTGHYAKIENKNNSYTLKQAKDKIKDQSYFLSHLSKKQISKLHFPLGDLLKSEIRQIAHEIDLPNKNRKDSQGICFLGKIKYNEFIKYHLGELKGNIIEQETGKILGTHNGYWFFTIGQRKGIKLSHGPWFVTEKDIQNNIIYISNSTNYLKQGKEQFLVHKTNWINKPLKNDNLSAKIRHGEKKIKCKIETLKDEIIRVNLEEKDYGISPGQFCIFYKEDECLGGAKILKTLI.

ATP contacts are provided by residues 6-13 (LLSGGVDS) and L33. The Nucleophile role is filled by C100. A disulfide bridge connects residues C100 and C195. G123 contributes to the ATP binding site. The tract at residues 145-147 (KDQ) is interaction with tRNA. C195 acts as the Cysteine persulfide intermediate in catalysis.

Belongs to the MnmA/TRMU family.

Its subcellular location is the cytoplasm. It catalyses the reaction S-sulfanyl-L-cysteinyl-[protein] + uridine(34) in tRNA + AH2 + ATP = 2-thiouridine(34) in tRNA + L-cysteinyl-[protein] + A + AMP + diphosphate + H(+). Catalyzes the 2-thiolation of uridine at the wobble position (U34) of tRNA, leading to the formation of s(2)U34. This is tRNA-specific 2-thiouridylase MnmA from Borrelia duttonii (strain Ly).